Reading from the N-terminus, the 216-residue chain is MDLYERWKRTVEMLEREGIIRSLEVKEAFLKYPRYMFVEDRYKSYAHIDEPLPIPAGQTVSAPHMVAIMLEIAKLKEGMNVLEVGTGSGWNAALISYIVKTDVYSIERIPELVEFAKRNLERAGVKNVHVILGDGSKGFPPKAPYDVIIVTAGAPKVPEPLVEQLKPGGRLIIPVGSYHLWQELLEVVKKKSGEIKVRNHGGVAFVPLIGEYGWRE.

Residue Ser61 is part of the active site.

Belongs to the methyltransferase superfamily. L-isoaspartyl/D-aspartyl protein methyltransferase family.

Its subcellular location is the cytoplasm. The catalysed reaction is [protein]-L-isoaspartate + S-adenosyl-L-methionine = [protein]-L-isoaspartate alpha-methyl ester + S-adenosyl-L-homocysteine. Catalyzes the methyl esterification of L-isoaspartyl residues in peptides and proteins that result from spontaneous decomposition of normal L-aspartyl and L-asparaginyl residues. It plays a role in the repair and/or degradation of damaged proteins. This Pyrococcus abyssi (strain GE5 / Orsay) protein is Protein-L-isoaspartate O-methyltransferase (pcm).